Reading from the N-terminus, the 257-residue chain is UPF0246 protein SO_3540 (257 aa).

This sequence belongs to the UPF0246 family.

This chain is UPF0246 protein SO_3540, found in Shewanella oneidensis (strain ATCC 700550 / JCM 31522 / CIP 106686 / LMG 19005 / NCIMB 14063 / MR-1).